Consider the following 935-residue polypeptide: Protocadherin gamma-A11 (935 aa).

A signal peptide spans 1–29; sequence MANRLQRGDRSRLLLLLCIFLGTLRGFRA. Cadherin domains follow at residues 30-134, 135-243, 244-348, 349-453, 454-563, and 571-677; these read RQIR…APSF, QEDE…IPMF, TQSV…APEI, TITS…PPVF, PHSS…APEI, and DGST…ADLG. The Extracellular segment spans residues 30–693; sequence RQIRYSVPEE…NSETSDLSLY (664 aa). N-linked (GlcNAc...) asparagine glycosylation occurs at asparagine 48. Asparagine 255, asparagine 266, asparagine 420, and asparagine 546 each carry an N-linked (GlcNAc...) asparagine glycan. The helical transmembrane segment at 694–714 threads the bilayer; it reads LVVAVAAVSCIFLVFVIVLLA. The Cytoplasmic portion of the chain corresponds to 715–935; it reads LRLWRWHKSR…KKKSGKKEKK (221 aa). Disordered regions lie at residues 805-844 and 905-935; these read CDPTSNQQAPPNTDWRFSQAQRPGTSGSQNGDDTGTWPNN and ATLTNAAGKRDGKAPAGGNGNKKKSGKKEKK. Residues 807–844 are compositionally biased toward polar residues; the sequence is PTSNQQAPPNTDWRFSQAQRPGTSGSQNGDDTGTWPNN. Over residues 925-935 the composition is skewed to basic residues; it reads NKKKSGKKEKK.

It localises to the cell membrane. Functionally, potential calcium-dependent cell-adhesion protein. May be involved in the establishment and maintenance of specific neuronal connections in the brain. In Homo sapiens (Human), this protein is Protocadherin gamma-A11 (PCDHGA11).